Here is a 283-residue protein sequence, read N- to C-terminus: V-set domain containing T-cell activation inhibitor 1 (283 aa).

The N-terminal stretch at 1 to 24 (MASLGQIIFWSIINIIIILAGAIA) is a signal peptide. 2 consecutive Ig-like V-type domains span residues 35 to 144 (HFIT…ANLE) and 153 to 241 (PEIN…IKVT). Disulfide bonds link cysteine 56–cysteine 130 and cysteine 168–cysteine 225. Asparagine 216 carries N-linked (GlcNAc...) asparagine glycosylation. The GPI-anchor amidated glycine moiety is linked to residue glycine 257. A propeptide spans 258–283 (PSPCVFSSAFVAGWALLSLSCCLMLR) (removed in mature form).

This sequence belongs to the immunoglobulin superfamily. BTN/MOG family. Post-translationally, N-glycosylated. Expressed on the surface of professional antigen-presenting cells (at protein level). Widely expressed, including in kidney, liver, lung, pancreas, placenta, prostate, spleen, testis and thymus.

It localises to the cell membrane. Negatively regulates T-cell-mediated immune response by inhibiting T-cell activation, proliferation, cytokine production and development of cytotoxicity. When expressed on the cell surface of tumor macrophages, plays an important role, together with regulatory T-cells (Treg), in the suppression of tumor-associated antigen-specific T-cell immunity. Involved in promoting epithelial cell transformation. This is V-set domain containing T-cell activation inhibitor 1 from Mus musculus (Mouse).